Consider the following 99-residue polypeptide: UPF0473 protein LEUM_0559 (99 aa).

Belongs to the UPF0473 family.

This chain is UPF0473 protein LEUM_0559, found in Leuconostoc mesenteroides subsp. mesenteroides (strain ATCC 8293 / DSM 20343 / BCRC 11652 / CCM 1803 / JCM 6124 / NCDO 523 / NBRC 100496 / NCIMB 8023 / NCTC 12954 / NRRL B-1118 / 37Y).